Consider the following 544-residue polypeptide: Cytochrome P450 monooxygenase verL (544 aa).

Residues 3-23 (VALFPILPIGCLLIYIIFKLW) form a helical membrane-spanning segment. Cys446 provides a ligand contact to heme. Residues 520-544 (QEKGIDGWKGKKESSSEENRGVSSR) are disordered.

Belongs to the cytochrome P450 family. Heme serves as cofactor.

The protein resides in the membrane. It functions in the pathway mycotoxin biosynthesis. In terms of biological role, cytochrome P450 monooxygenase; part of the gene cluster that mediates the biosynthesis of 11'-deoxyverticillin A, one of the dimeric epipolythiodioxopiperazines (ETPs) from the verticillin family that act as mycotoxins. 11'-deoxyverticillin A is required for normal conidiation. The nonribosomal peptide synthetase verP is speculated to be responsible for condensation of amino acids to form the carbon skeleton of verticillin, whereas the cluster-specific tailoring enzymes are involved in further modifications leading to the production of 11'-deoxyverticillin A. The protein is Cytochrome P450 monooxygenase verL of Clonostachys rogersoniana.